Here is a 480-residue protein sequence, read N- to C-terminus: tRNA-2-methylthio-N(6)-dimethylallyladenosine synthase (480 aa).

In terms of domain architecture, MTTase N-terminal spans 43–161 (KLYCLNTFGC…FPELLYSAMD (119 aa)). Cys52, Cys88, Cys122, Cys198, Cys202, and Cys205 together coordinate [4Fe-4S] cluster. The Radical SAM core domain maps to 184-414 (RKDGVKAWVT…LETQNRISKE (231 aa)). A TRAM domain is found at 417 to 480 (DTFLGKVVEV…TWSLEGSIVR (64 aa)).

The protein belongs to the methylthiotransferase family. MiaB subfamily. As to quaternary structure, monomer. [4Fe-4S] cluster is required as a cofactor.

It is found in the cytoplasm. It catalyses the reaction N(6)-dimethylallyladenosine(37) in tRNA + (sulfur carrier)-SH + AH2 + 2 S-adenosyl-L-methionine = 2-methylsulfanyl-N(6)-dimethylallyladenosine(37) in tRNA + (sulfur carrier)-H + 5'-deoxyadenosine + L-methionine + A + S-adenosyl-L-homocysteine + 2 H(+). Catalyzes the methylthiolation of N6-(dimethylallyl)adenosine (i(6)A), leading to the formation of 2-methylthio-N6-(dimethylallyl)adenosine (ms(2)i(6)A) at position 37 in tRNAs that read codons beginning with uridine. This is tRNA-2-methylthio-N(6)-dimethylallyladenosine synthase from Acetivibrio thermocellus (strain ATCC 27405 / DSM 1237 / JCM 9322 / NBRC 103400 / NCIMB 10682 / NRRL B-4536 / VPI 7372) (Clostridium thermocellum).